Consider the following 501-residue polypeptide: Glycosyltransferase family 92 protein F13G3.3 (501 aa).

A helical transmembrane segment spans residues 10-30; sequence LSVVLLFSFLFFVTAVLLQFI. Residues 151–439 form the GT92 domain; it reads KPVVMCISPL…ISDCYKQSYY (289 aa).

This sequence belongs to the glycosyltransferase 92 family.

The protein resides in the membrane. In Caenorhabditis elegans, this protein is Glycosyltransferase family 92 protein F13G3.3.